The following is an 83-amino-acid chain: Exodeoxyribonuclease 7 small subunit (83 aa).

Positions 63–83 are disordered; sequence VQNDDGTTGTEPLADTGESGR.

It belongs to the XseB family. In terms of assembly, heterooligomer composed of large and small subunits.

The protein resides in the cytoplasm. The enzyme catalyses Exonucleolytic cleavage in either 5'- to 3'- or 3'- to 5'-direction to yield nucleoside 5'-phosphates.. Bidirectionally degrades single-stranded DNA into large acid-insoluble oligonucleotides, which are then degraded further into small acid-soluble oligonucleotides. The protein is Exodeoxyribonuclease 7 small subunit of Gluconobacter oxydans (strain 621H) (Gluconobacter suboxydans).